Here is a 229-residue protein sequence, read N- to C-terminus: Peroxiredoxin-like 2A (229 aa).

Residues 14–112 (MWSIGVGAFG…DELGVPLYAV (99 aa)) form a thioredoxin fold region. Active-site redox-active residues include Cys85 and Cys88.

This sequence belongs to the peroxiredoxin-like PRXL2 family. PRXL2A subfamily. In terms of tissue distribution, expressed by the principal cells of the epididymis. Detected in the head region of epididymal sperm (at protein level). Expressed in bone marrow.

The protein localises to the cytoplasm. Its subcellular location is the secreted. Its function is as follows. Involved in redox regulation of the cell. Acts as an antioxidant. Inhibits TNFSF11-induced NFKB1 and JUN activation and osteoclast differentiation. May affect bone resorption and help to maintain bone mass. Acts as a negative regulator of macrophage-mediated inflammation by inhibiting macrophage production of inflammatory cytokines, probably through suppression of the MAPK signaling pathway. This is Peroxiredoxin-like 2A from Rattus norvegicus (Rat).